Consider the following 214-residue polypeptide: Phosphoribosylglycinamide formyltransferase (214 aa).

12-14 (GSN) contacts N(1)-(5-phospho-beta-D-ribosyl)glycinamide. (6R)-10-formyltetrahydrofolate is bound by residues 105 to 108 (LLIL) and Asn-123. The active-site Proton donor is His-125. Asp-167 contacts (6R)-10-formyltetrahydrofolate. Glu-197 contacts N(1)-(5-phospho-beta-D-ribosyl)glycinamide.

Belongs to the GART family.

It catalyses the reaction N(1)-(5-phospho-beta-D-ribosyl)glycinamide + (6R)-10-formyltetrahydrofolate = N(2)-formyl-N(1)-(5-phospho-beta-D-ribosyl)glycinamide + (6S)-5,6,7,8-tetrahydrofolate + H(+). The protein operates within purine metabolism; IMP biosynthesis via de novo pathway; N(2)-formyl-N(1)-(5-phospho-D-ribosyl)glycinamide from N(1)-(5-phospho-D-ribosyl)glycinamide (10-formyl THF route): step 1/1. The chain is Phosphoribosylglycinamide formyltransferase from Saccharomyces cerevisiae (strain ATCC 204508 / S288c) (Baker's yeast).